A 200-amino-acid polypeptide reads, in one-letter code: Large ribosomal subunit protein uL4 (200 aa).

Residues 43-70 (RAQKTRAEVSGSGKKPWRQKGTGRARSG) form a disordered region.

The protein belongs to the universal ribosomal protein uL4 family. In terms of assembly, part of the 50S ribosomal subunit.

One of the primary rRNA binding proteins, this protein initially binds near the 5'-end of the 23S rRNA. It is important during the early stages of 50S assembly. It makes multiple contacts with different domains of the 23S rRNA in the assembled 50S subunit and ribosome. In terms of biological role, forms part of the polypeptide exit tunnel. This Glaesserella parasuis serovar 5 (strain SH0165) (Haemophilus parasuis) protein is Large ribosomal subunit protein uL4.